Here is a 120-residue protein sequence, read N- to C-terminus: UPF0231 protein YacL (120 aa).

It belongs to the UPF0231 family.

In Salmonella typhi, this protein is UPF0231 protein YacL.